Here is a 545-residue protein sequence, read N- to C-terminus: Methionine--tRNA ligase (545 aa).

The 'HIGH' region signature appears at 13–23; sequence PYANGEIHLGH. Zn(2+)-binding residues include C144, C147, C157, and C160. Residues 329–333 carry the 'KMSKS' region motif; sequence KMSKS. K332 lines the ATP pocket.

It belongs to the class-I aminoacyl-tRNA synthetase family. MetG type 1 subfamily. Monomer. Requires Zn(2+) as cofactor.

It is found in the cytoplasm. It catalyses the reaction tRNA(Met) + L-methionine + ATP = L-methionyl-tRNA(Met) + AMP + diphosphate. Functionally, is required not only for elongation of protein synthesis but also for the initiation of all mRNA translation through initiator tRNA(fMet) aminoacylation. The sequence is that of Methionine--tRNA ligase from Vesicomyosocius okutanii subsp. Calyptogena okutanii (strain HA).